The primary structure comprises 441 residues: MYGGDEVSAIVVDLGSHTCKAGYAGEDAPKAVFPSVIGAVDGVEAMDVDVDSTKTNSNSEDSKTESEKEKSKRKLYVGSQAMSYRRDHMEVLSPIKDGIVSDWDLVDNIWEHAFKSCLMIDPTEHPMLLAEPPLNTQQQREKAAELMFEKYKVPALFMAKNPVLTSFATGRATSLVVDCGGGSTTISPVHDGYVLQKAVVSSPLGGEFLTDCLLKSLESKGIKIRPRYSFKRKEVRAGEFQVEDVDIPDTTESYKLFCQRMIVGDIKDSICRVPDTPYDDKSYSNIPTTSYELPDGQTLEIGADRFKVPDVMFNPSIVQTIPGMEKYAEMIPSVRGLPHMVMESINKCDVDIRRELYSSILLAGGTSSMQQLKERLEKDLIEESPHSARVKVLASGNTTERRFSVWIGGSILASLGSFQQMWFSKSEYEEHGASYIQRKCP.

Residues Val-48–Arg-73 are disordered. Residues Glu-60–Lys-70 show a composition bias toward basic and acidic residues.

This sequence belongs to the actin family. ARP4 subfamily. Component of the SWR1 chromatin-remodeling complex and of the NuA4 histone acetyltransferase complex. Interacts with the SWI/SNF complex. Interacts with EAF1A and EAF1B. In terms of tissue distribution, mostly expressed in flowers, and, to a lower extent, in roots, seedlings, leaves and siliques (at protein level).

The protein resides in the nucleus. The protein localises to the cytoplasm. Involved in several developmental processes including organization of plant organs, flowering time, anther development, flower senescence and fertility, probably by regulating the chromatin structure. The protein is Actin-related protein 4 of Arabidopsis thaliana (Mouse-ear cress).